The sequence spans 176 residues: Replication restart protein PriC (176 aa).

Belongs to the PriC family. Component of the replication restart primosome, which is composed of PriA, PriB, PriC, DnaB and DnaT; DnaG primase associates transiently with this complex. Interacts with the C-terminus of SSB; this interaction is required to load the main replicative helicase onto substrate replication forks. Interacts with helicase DnaB alone and in the DnaB-DnaC complex, probably 1:1 binding with DnaB. Interacts with DnaT.

Its function is as follows. Involved in the restart of stalled replication forks, which reloads the DnaB replicative helicase on sites other than the origin of replication. Recognizes abandoned replication forks and remodels DNA single-stranded binding protein (SSB) on ssDNA to uncover a loading site for DnaB. There are several restart pathways, the PriA-PriC pathway is a minor restart pathway. Part of the minor PriC-Rep pathway for restart of stalled replication forks, which has a different substrate specificity than PriA. Part of the major restart pathway with PriA, PriB, DnaB, DnaT and DnaG primase. priB and priC have redundant roles in the cell. Binds 7-9 nucleotides of single-stranded (ss)DNA. This Klebsiella pneumoniae subsp. pneumoniae (strain ATCC 700721 / MGH 78578) protein is Replication restart protein PriC.